A 404-amino-acid polypeptide reads, in one-letter code: Pectate lyase E (404 aa).

The signal sequence occupies residues 1 to 41; the sequence is MNNSRMSSVSTQKTTGRSALGTKSALAAIIATTMMVSVASA. 2 residues coordinate Ca(2+): aspartate 182 and aspartate 225. Arginine 278 is an active-site residue.

Belongs to the polysaccharide lyase 1 family. PLBC subfamily. The cofactor is Ca(2+).

Its subcellular location is the secreted. The enzyme catalyses Eliminative cleavage of (1-&gt;4)-alpha-D-galacturonan to give oligosaccharides with 4-deoxy-alpha-D-galact-4-enuronosyl groups at their non-reducing ends.. It functions in the pathway glycan metabolism; pectin degradation; 2-dehydro-3-deoxy-D-gluconate from pectin: step 2/5. In terms of biological role, involved in maceration and soft-rotting of plant tissue. Pectate lyases have been implicated as pathogenicity factors which induce maceration or rotting of plant tissue. PelE is sufficient to induce these effects under laboratory conditions. The sequence is that of Pectate lyase E (pelE) from Dickeya dadantii (strain 3937) (Erwinia chrysanthemi (strain 3937)).